The chain runs to 210 residues: UPF0637 protein RBAM_014510 (210 aa).

This sequence belongs to the UPF0637 family.

The sequence is that of UPF0637 protein RBAM_014510 from Bacillus velezensis (strain DSM 23117 / BGSC 10A6 / LMG 26770 / FZB42) (Bacillus amyloliquefaciens subsp. plantarum).